The sequence spans 185 residues: Elongation factor P (185 aa).

Belongs to the elongation factor P family.

Its subcellular location is the cytoplasm. Its pathway is protein biosynthesis; polypeptide chain elongation. Functionally, involved in peptide bond synthesis. Stimulates efficient translation and peptide-bond synthesis on native or reconstituted 70S ribosomes in vitro. Probably functions indirectly by altering the affinity of the ribosome for aminoacyl-tRNA, thus increasing their reactivity as acceptors for peptidyl transferase. This Streptococcus pyogenes serotype M28 (strain MGAS6180) protein is Elongation factor P.